Consider the following 316-residue polypeptide: MSENIPDIDPNELLPNAPGQHQDLGVDNPPEPDNASIRAERGSPTPSSVTVDNAPSLPDRSFSHLPINDPFSGEIPEVPIPSSAISISSQALSDPVPTPSDTSRPGILRNDEQGSTSSHPVDPQEPNEVNNEYLAHLLDLGFDEYTAVLALKRTNSAGVEQAVAWIVERSNESDFDEDSSSSENEADEEMGAVQSVAGRTHKMVLVANMSLKMGTGKIAAQVGHATLGVYRQAMNSENGQNAIAAWTRHGQVKIVVKGQSTEQLMDLCKVAKDAGCYYYLVQDAGYTQIPAGSRTVLGIFGTVEQVDSVTGGLKLL.

The segment at 1–127 is disordered; the sequence is MSENIPDIDP…SHPVDPQEPN (127 aa). Positions 44–53 are enriched in polar residues; the sequence is PTPSSVTVDN. Low complexity predominate over residues 75–89; the sequence is IPEVPIPSSAISISS. Residues 128 to 169 enclose the UBA domain; that stretch reads EVNNEYLAHLLDLGFDEYTAVLALKRTNSAGVEQAVAWIVER. The interval 170 to 193 is disordered; it reads SNESDFDEDSSSSENEADEEMGAV. The segment covering 173–190 has biased composition (acidic residues); the sequence is SDFDEDSSSSENEADEEM.

The protein belongs to the PTH2 family.

The catalysed reaction is an N-acyl-L-alpha-aminoacyl-tRNA + H2O = an N-acyl-L-amino acid + a tRNA + H(+). In terms of biological role, the natural substrate for this enzyme may be peptidyl-tRNAs which drop off the ribosome during protein synthesis. The chain is Probable peptidyl-tRNA hydrolase 2 from Caenorhabditis elegans.